A 566-amino-acid polypeptide reads, in one-letter code: Protein kintoun (566 aa).

3 disordered regions span residues 183–298 (KYKG…TAPQ), 399–467 (EEEE…AETG), and 493–552 (QLEE…ESRI). Residues 208–290 (PQQTTGPQQP…HQPTDPQQTT (83 aa)) are compositionally biased toward low complexity. Over residues 399–424 (EEEERRAEEEESRKGGDEDGELHPDC) the composition is skewed to basic and acidic residues. Over residues 440 to 467 (TPAADTHTPAADTHTPAADTHTPAAETG) the composition is skewed to low complexity. A compositionally biased stretch (basic and acidic residues) spans 535–550 (DPAHTDPAHTDPEMES).

It belongs to the PIH1 family. Kintoun subfamily.

It is found in the cytoplasm. The protein localises to the dynein axonemal particle. Functionally, required for cytoplasmic pre-assembly of axonemal dyneins, thereby playing a central role in motility in cilia and flagella. Involved in pre-assembly of dynein arm complexes in the cytoplasm before intraflagellar transport loads them for the ciliary compartment. The polypeptide is Protein kintoun (Danio rerio (Zebrafish)).